Reading from the N-terminus, the 46-residue chain is MGPAVVFDCMTADFLNDDPNNAELSSLEMEELESWGAWSDDTDQSV.

A propeptide spanning residues 10–46 is cleaved from the precursor; sequence MTADFLNDDPNNAELSSLEMEELESWGAWSDDTDQSV.

The precursor peptide is first ribosomally synthesized and then highly tailored by specific enzymes to yield the final natural product. These modifications include several methylations, cyclization and the formation of t-Leu and Thia-beta-Ala residues.

The protein localises to the secreted. In terms of biological role, bottromycin D is a ribosomally synthesized and post-translationally modified peptide (RiPP) that displays antibiotic activity against methicillin-resistant S.aureus (MRSA). This chain is Bottromycin D, found in Streptomyces sp.